Consider the following 301-residue polypeptide: GTPase Era (301 aa).

One can recognise an Era-type G domain in the interval 7 to 175 (YCGFIAIVGR…AAIVRKHLPE (169 aa)). The tract at residues 15–22 (GRPNVGKS) is G1. 15 to 22 (GRPNVGKS) provides a ligand contact to GTP. The tract at residues 41–45 (QTTRH) is G2. Residues 62-65 (DTPG) are G3. GTP contacts are provided by residues 62-66 (DTPGL) and 124-127 (NKVD). Positions 124-127 (NKVD) are G4. Positions 154-156 (ISA) are G5. Residues 206–283 (LGAELPYSVT…HLELWVKVKS (78 aa)) form the KH type-2 domain.

Belongs to the TRAFAC class TrmE-Era-EngA-EngB-Septin-like GTPase superfamily. Era GTPase family. As to quaternary structure, monomer.

Its subcellular location is the cytoplasm. It is found in the cell inner membrane. Its function is as follows. An essential GTPase that binds both GDP and GTP, with rapid nucleotide exchange. Plays a role in 16S rRNA processing and 30S ribosomal subunit biogenesis and possibly also in cell cycle regulation and energy metabolism. This chain is GTPase Era, found in Escherichia coli O157:H7.